A 513-amino-acid chain; its full sequence is Maturase K (513 aa).

This sequence belongs to the intron maturase 2 family. MatK subfamily.

It localises to the plastid. The protein resides in the chloroplast. Usually encoded in the trnK tRNA gene intron. Probably assists in splicing its own and other chloroplast group II introns. The polypeptide is Maturase K (Byblis liniflora (Carnivorous plant)).